The sequence spans 67 residues: Large ribosomal subunit protein bL35 (67 aa).

This sequence belongs to the bacterial ribosomal protein bL35 family.

The chain is Large ribosomal subunit protein bL35 from Synechocystis sp. (strain ATCC 27184 / PCC 6803 / Kazusa).